We begin with the raw amino-acid sequence, 167 residues long: SAR-endolysin (167 aa).

A helical; Signal-anchor for type II membrane protein transmembrane segment spans residues 10-32 (SVMAAISGGAIAIASVLITGPGG). Catalysis depends on proton donor/acceptor residues glutamate 37 and aspartate 46.

It belongs to the glycosyl hydrolase 24 family.

It is found in the host cell inner membrane. It carries out the reaction Hydrolysis of (1-&gt;4)-beta-linkages between N-acetylmuramic acid and N-acetyl-D-glucosamine residues in a peptidoglycan and between N-acetyl-D-glucosamine residues in chitodextrins.. In terms of biological role, signal-arrest-release (SAR) endolysin with lysozyme activity that degrades host peptidoglycans and participates with the pinholin and spanin proteins in the sequential events which lead to programmed host cell lysis releasing the mature viral particles. Once the pinholin has permeabilized the host cell membrane, the SAR-endolysin is released into the periplasm where it breaks down the peptidoglycan layer. This chain is SAR-endolysin (19), found in Bacteriophage PS119.